Here is a 290-residue protein sequence, read N- to C-terminus: 33 kDa chaperonin (290 aa).

Intrachain disulfides connect Cys-235/Cys-237 and Cys-268/Cys-271.

The protein belongs to the HSP33 family. In terms of processing, under oxidizing conditions two disulfide bonds are formed involving the reactive cysteines. Under reducing conditions zinc is bound to the reactive cysteines and the protein is inactive.

The protein resides in the cytoplasm. In terms of biological role, redox regulated molecular chaperone. Protects both thermally unfolding and oxidatively damaged proteins from irreversible aggregation. Plays an important role in the bacterial defense system toward oxidative stress. The protein is 33 kDa chaperonin of Streptococcus pyogenes serotype M3 (strain ATCC BAA-595 / MGAS315).